We begin with the raw amino-acid sequence, 561 residues long: Guanine nucleotide-binding protein-like 3 (561 aa).

Positions 28–46 (HNRKLKKAAKKQGISRKAK) are enriched in basic residues. Disordered regions lie at residues 28-58 (HNRK…APFK) and 76-110 (KEQN…KKAK). Residues 53 to 98 (NSAPFKEEVLREAEQRKQELETLKEQNKIVKQQEKAAKRKKEKDAA) are a coiled coil. The segment covering 76–88 (KEQNKIVKQQEKA) has biased composition (basic and acidic residues). Residues 133–319 (CQELNKVIEA…MIDSPGILAA (187 aa)) form the CP-type G domain. GTP is bound by residues 181–184 (NKID), 268–275 (GFPNVGKS), and 312–315 (DSPG). The tract at residues 486 to 532 (ATTTDAEEEKMDTTTNTDEPEAESHISSTVEPIQEPTEKRKDKPAKE) is disordered. Over residues 521 to 532 (PTEKRKDKPAKE) the composition is skewed to basic and acidic residues.

This sequence belongs to the TRAFAC class YlqF/YawG GTPase family.

The protein resides in the nucleus. It is found in the nucleolus. Functionally, may play a role in regulating cellular proliferation. The chain is Guanine nucleotide-binding protein-like 3 (gnl3) from Danio rerio (Zebrafish).